A 411-amino-acid polypeptide reads, in one-letter code: Glutamate dehydrogenase A (411 aa).

Lysine 102 is a catalytic residue.

It belongs to the Glu/Leu/Phe/Val dehydrogenases family.

The enzyme catalyses L-glutamate + NAD(+) + H2O = 2-oxoglutarate + NH4(+) + NADH + H(+). It carries out the reaction L-glutamate + NADP(+) + H2O = 2-oxoglutarate + NH4(+) + NADPH + H(+). The sequence is that of Glutamate dehydrogenase A (GDHA) from Nicotiana plumbaginifolia (Leadwort-leaved tobacco).